A 119-amino-acid chain; its full sequence is NADH-ubiquinone oxidoreductase chain 3 (119 aa).

Transmembrane regions (helical) follow at residues 8–28 (IFIY…VPFL), 63–83 (LVSI…PWAV), and 88–108 (IDLF…IGFL).

The protein belongs to the complex I subunit 3 family.

The protein localises to the mitochondrion membrane. It catalyses the reaction a ubiquinone + NADH + 5 H(+)(in) = a ubiquinol + NAD(+) + 4 H(+)(out). Its function is as follows. Core subunit of the mitochondrial membrane respiratory chain NADH dehydrogenase (Complex I) that is believed to belong to the minimal assembly required for catalysis. Complex I functions in the transfer of electrons from NADH to the respiratory chain. The immediate electron acceptor for the enzyme is believed to be ubiquinone. This is NADH-ubiquinone oxidoreductase chain 3 (ND3) from Brassica napus (Rape).